Here is a 192-residue protein sequence, read N- to C-terminus: Ribosome maturation factor RimM (192 aa).

The region spanning 115-189 is the PRC barrel domain; the sequence is EGEYYLSDLI…RIEITPPKGL (75 aa).

The protein belongs to the RimM family. Binds ribosomal protein uS19.

It is found in the cytoplasm. In terms of biological role, an accessory protein needed during the final step in the assembly of 30S ribosomal subunit, possibly for assembly of the head region. Essential for efficient processing of 16S rRNA. May be needed both before and after RbfA during the maturation of 16S rRNA. It has affinity for free ribosomal 30S subunits but not for 70S ribosomes. This chain is Ribosome maturation factor RimM, found in Acaryochloris marina (strain MBIC 11017).